The chain runs to 671 residues: DNA ligase (671 aa).

Residues 31 to 35, 80 to 81, and glutamate 110 contribute to the NAD(+) site; these read DAEYD and SL. Lysine 112 functions as the N6-AMP-lysine intermediate in the catalytic mechanism. NAD(+) is bound by residues arginine 133, glutamate 167, lysine 283, and lysine 307. Residues cysteine 401, cysteine 404, cysteine 419, and cysteine 424 each coordinate Zn(2+). Residues 587–671 enclose the BRCT domain; it reads EEELVFTGKT…YLPDEGGLNE (85 aa).

The protein belongs to the NAD-dependent DNA ligase family. LigA subfamily. The cofactor is Mg(2+). It depends on Mn(2+) as a cofactor.

The catalysed reaction is NAD(+) + (deoxyribonucleotide)n-3'-hydroxyl + 5'-phospho-(deoxyribonucleotide)m = (deoxyribonucleotide)n+m + AMP + beta-nicotinamide D-nucleotide.. Functionally, DNA ligase that catalyzes the formation of phosphodiester linkages between 5'-phosphoryl and 3'-hydroxyl groups in double-stranded DNA using NAD as a coenzyme and as the energy source for the reaction. It is essential for DNA replication and repair of damaged DNA. The chain is DNA ligase from Listeria monocytogenes serotype 4b (strain F2365).